An 87-amino-acid chain; its full sequence is Small ribosomal subunit protein eS21 (87 aa).

It belongs to the eukaryotic ribosomal protein eS21 family. Component of the small ribosomal subunit. Mature ribosomes consist of a small (40S) and a large (60S) subunit. The 40S subunit contains about 33 different proteins and 1 molecule of RNA (18S). The 60S subunit contains about 49 different proteins and 3 molecules of RNA (25S, 5.8S and 5S).

The protein resides in the cytoplasm. In terms of biological role, required for the processing of the 20S rRNA-precursor to mature 18S rRNA in a late step of the maturation of 40S ribosomal subunits. Has a physiological role leading to 18S rRNA stability. This is Small ribosomal subunit protein eS21 (RPS21) from Candida albicans (Yeast).